The sequence spans 623 residues: Glutathione import ATP-binding protein GsiA (623 aa).

ABC transporter domains are found at residues 15 to 269 and 314 to 564; these read VENL…RALL and LRVR…RKLL. Residues 49 to 56 and 357 to 364 contribute to the ATP site; these read GESGSGKS.

Belongs to the ABC transporter superfamily. Glutathione importer (TC 3.A.1.5.11) family. As to quaternary structure, the complex is composed of two ATP-binding proteins (GsiA), two transmembrane proteins (GsiC and GsiD) and a solute-binding protein (GsiB).

The protein resides in the cell inner membrane. The enzyme catalyses glutathione(out) + ATP + H2O = glutathione(in) + ADP + phosphate + H(+). Its function is as follows. Part of the ABC transporter complex GsiABCD involved in glutathione import. Responsible for energy coupling to the transport system. In Escherichia coli O6:H1 (strain CFT073 / ATCC 700928 / UPEC), this protein is Glutathione import ATP-binding protein GsiA.